A 109-amino-acid polypeptide reads, in one-letter code: Small ribosomal subunit protein uS10 (109 aa).

It belongs to the universal ribosomal protein uS10 family. In terms of assembly, part of the 30S ribosomal subunit.

In terms of biological role, involved in the binding of tRNA to the ribosomes. In Wolbachia pipientis wMel, this protein is Small ribosomal subunit protein uS10.